Reading from the N-terminus, the 211-residue chain is Bcl-2-related ovarian killer protein homolog B (211 aa).

The BH4 signature appears at 32–44; it reads KELCRDFIHSRIT. Positions 67–83 match the BH3 motif; that stretch reads VSVVLLKLGDELECMRP. Residues 113–132 carry the BH1 motif; that stretch reads EVIAMGITWGKVVAIYAVAA. The BH2 signature appears at 165–179; that stretch reads WLKKRGGWVDILKCV. A helical transmembrane segment spans residues 190-210; the sequence is WLSTAVLTWREFIKTMYVYLT.

This sequence belongs to the Bcl-2 family. In terms of tissue distribution, expressed strongly in ovary and more weakly in eye. Little expression in other tissues examined.

It localises to the membrane. Functionally, may play a role in apoptosis. Does not appear to show pro-apoptotic activity when expressed ectopically in early embryos. The polypeptide is Bcl-2-related ovarian killer protein homolog B (bokb) (Danio rerio (Zebrafish)).